Consider the following 252-residue polypeptide: Cell division protein ZapD (252 aa).

It belongs to the ZapD family. In terms of assembly, interacts with FtsZ.

Its subcellular location is the cytoplasm. Cell division factor that enhances FtsZ-ring assembly. Directly interacts with FtsZ and promotes bundling of FtsZ protofilaments, with a reduction in FtsZ GTPase activity. The polypeptide is Cell division protein ZapD (Dechloromonas aromatica (strain RCB)).